A 320-amino-acid chain; its full sequence is Malate dehydrogenase (320 aa).

Residues 10 to 15 and Asp34 contribute to the NAD(+) site; that span reads GSGMIG. Residues Arg83 and Arg89 each coordinate substrate. Residues Asn96 and 119–121 contribute to the NAD(+) site; that span reads ITN. Substrate is bound by residues Asn121 and Arg152. The active-site Proton acceptor is His176.

It belongs to the LDH/MDH superfamily. MDH type 3 family.

The enzyme catalyses (S)-malate + NAD(+) = oxaloacetate + NADH + H(+). Functionally, catalyzes the reversible oxidation of malate to oxaloacetate. The sequence is that of Malate dehydrogenase from Brucella anthropi (strain ATCC 49188 / DSM 6882 / CCUG 24695 / JCM 21032 / LMG 3331 / NBRC 15819 / NCTC 12168 / Alc 37) (Ochrobactrum anthropi).